Consider the following 661-residue polypeptide: Threonine--tRNA ligase (661 aa).

The TGS domain occupies 1-64 (MSQAISLTFP…TTGRIEIITR (64 aa)). A catalytic region spans residues 245–546 (DHRRLGREMD…LIENFAGHMP (302 aa)). Zn(2+) is bound by residues Cys-341, His-392, and His-523.

The protein belongs to the class-II aminoacyl-tRNA synthetase family. Homodimer. It depends on Zn(2+) as a cofactor.

The protein localises to the cytoplasm. The catalysed reaction is tRNA(Thr) + L-threonine + ATP = L-threonyl-tRNA(Thr) + AMP + diphosphate + H(+). Its function is as follows. Catalyzes the attachment of threonine to tRNA(Thr) in a two-step reaction: L-threonine is first activated by ATP to form Thr-AMP and then transferred to the acceptor end of tRNA(Thr). Also edits incorrectly charged L-seryl-tRNA(Thr). This Rhizobium johnstonii (strain DSM 114642 / LMG 32736 / 3841) (Rhizobium leguminosarum bv. viciae) protein is Threonine--tRNA ligase.